The chain runs to 179 residues: Large ribosomal subunit protein uL5 (179 aa).

It belongs to the universal ribosomal protein uL5 family. Part of the 50S ribosomal subunit; part of the 5S rRNA/L5/L18/L25 subcomplex. Contacts the 5S rRNA and the P site tRNA. Forms a bridge to the 30S subunit in the 70S ribosome.

Functionally, this is one of the proteins that bind and probably mediate the attachment of the 5S RNA into the large ribosomal subunit, where it forms part of the central protuberance. In the 70S ribosome it contacts protein S13 of the 30S subunit (bridge B1b), connecting the 2 subunits; this bridge is implicated in subunit movement. Contacts the P site tRNA; the 5S rRNA and some of its associated proteins might help stabilize positioning of ribosome-bound tRNAs. This is Large ribosomal subunit protein uL5 from Shouchella clausii (strain KSM-K16) (Alkalihalobacillus clausii).